The sequence spans 1265 residues: MSPALQDLSQPEGLKKTLRDEINAILQKRIMVLDGGMGTMIQREKLNEEHFRGQEFKDHARPLKGNNDILSITQPDVIYQIHKEYLLAGADIIETNTFSSTSIAQADYGLEHLAYRMNMCSAGVARKAAEEVTLQTGIKRFVAGALGPTNKTLSVSPSVERPDYRNITFDELVEAYQEQAKGLLDGGVDILLIETIFDTANAKAALFALQNLFEEKYAPRPIFISGTIVDKSGRTLSGQTGEGFVISVSHGEPLCIGLNCALGAAEMRPFIEIIGKCTTAYVLCYPNAGLPNTFGDYDETPSMMAKHLKDFAMDGLVNIVGGCCGSTPDHIREIAEAVKNCKPRVPPATAFEGHMLLSGLEPFRIGPYTNFVNIGERCNVAGSRKFAKLIMAGNYEEALCVAKVQVEMGAQVLDVNMDDGMLDGPSAMTRFCNLIASEPDIAKVPLCIDSSNFAVIEAGLKCCQGKCIVNSISLKEGEDDFLEKARKIKKYGAAMVVMAFDEEGQATETDTKIRVCTRAYHLLVKKLGFNPNDIIFDPNILTIGTGMEEHNLYAINFIHATKVIKETLPGARISGGLSNLSFSFRGMEAIREAMHGVFLYHAIKSGMDMGIVNAGNLPVYDDIHKELLQLCEDLIWNKDPEATEKLLRYAQTQGTGGKKVIQTDEWRNGPVEERLEYALVKGIEKHIIEDTEEARLNQKKYPRPLNIIEGPLMNGMKIVGDLFGAGKMFLPQVIKSARVMKKAVGHLIPFMEKEREETRVLNGTVEEEDPYQGTIVLATVKGDVHDIGKNIVGVVLGCNNFRVIDLGVMTPCDKILKAALDHKADIIGLSGLITPSLDEMIFVAKEMERLAIRIPLLIGGATTSKTHTAVKIAPRYSAPVIHVLDASKSVVVCSQLLDENLKDEYFEEIMEEYEDIRQDHYESLKERRYLPLSQARKSGFQMDWLSEPHPVKPTFIGTQVFEDYDLQKLVDYIDWKPFFDVWQLRGKYPNRGFPKIFNDKTVGGEARKVYDDAHNMLNTLISQKKLRARGVVGFWPAQSIQDDIHLYAEAAVPQAAEPIATFYGLRQQAEKDSASTEPYYCLSDFIAPLHSGIRDYLGLFAVACFGVEELSKAYEDDGDDYSSIMVKALGDRLAEAFAEELHERVRRELWAYCGSEQLDVADLRRLRYKGIRPAPGYPSQPDHTEKLTMWRLADIEQSTGIRLTESLAMAPASAVSGLYFSNLKSKYFAVGKISKDQVEDYALRKNISVAEVEKWLGPILGYDTD.

The 320-residue stretch at R19–V338 folds into the Hcy-binding domain. Zn(2+) contacts are provided by C260, C323, and C324. Residues F371 to E632 enclose the Pterin-binding domain. (6S)-5,6,7,8-tetrahydrofolate contacts are provided by residues G382–R384, D449, N470, D537, N579, R585, and R591. Positions Q662–R759 constitute a B12-binding N-terminal domain. Methylcob(III)alamin-binding positions include E709, G782–D786, H785, S830, T834, and A886. A B12-binding domain is found at Q772–E907. Residues S923–D1265 form the AdoMet activation domain. S-adenosyl-L-methionine contacts are provided by residues D974, R1172, and Y1227–F1228. A Phosphothreonine modification is found at T1264.

The protein belongs to the vitamin-B12 dependent methionine synthase family. As to quaternary structure, monomer. Dimer. Forms a multiprotein complex with MMACHC, MMADHC and MTRR. Methylcob(III)alamin is required as a cofactor. Requires Zn(2+) as cofactor. As to expression, widely expressed. Expressed at the highest levels in pancreas, heart, brain, skeletal muscle and placenta. Expressed at lower levels in lung, liver and kidney.

The protein resides in the cytoplasm. The catalysed reaction is (6S)-5-methyl-5,6,7,8-tetrahydrofolate + L-homocysteine = (6S)-5,6,7,8-tetrahydrofolate + L-methionine. It functions in the pathway amino-acid biosynthesis; L-methionine biosynthesis via de novo pathway; L-methionine from L-homocysteine (MetH route): step 1/1. In terms of biological role, catalyzes the transfer of a methyl group from methylcob(III)alamin (MeCbl) to homocysteine, yielding enzyme-bound cob(I)alamin and methionine in the cytosol. MeCbl is an active form of cobalamin (vitamin B12) used as a cofactor for methionine biosynthesis. Cob(I)alamin form is regenerated to MeCbl by a transfer of a methyl group from 5-methyltetrahydrofolate. The processing of cobalamin in the cytosol occurs in a multiprotein complex composed of at least MMACHC, MMADHC, MTRR (methionine synthase reductase) and MTR which may contribute to shuttle safely and efficiently cobalamin towards MTR in order to produce methionine. The chain is Methionine synthase from Homo sapiens (Human).